The chain runs to 1172 residues: Tudor domain-containing protein 1 (1172 aa).

Disordered stretches follow at residues 1 to 59 (MMPR…KNNF) and 72 to 136 (QEDS…KKSH). Low complexity-rich tracts occupy residues 75-86 (SSVVSSNPAVVN) and 103-117 (NPVS…SPPN). Residues 118–129 (QVKTKPSSNVTP) are compositionally biased toward polar residues. Positions 163, 166, 174, 177, 183, 187, 195, and 199 each coordinate Zn(2+). The segment at 163–199 (CHRCGLFGSLRCSQCKQTYYCSTACQRRDWSSHSTIC) adopts an MYND-type zinc-finger fold. Tudor domains lie at 307–367 (LPVK…LDLF), 536–595 (YPTI…LLDL), 756–815 (KAEI…FLLL), and 982–1040 (RPRT…HLEL).

This sequence belongs to the TDRD1 family. In terms of assembly, found in a mRNP complex, at least composed of TDRD1, TDRD6, TDRD7 and DDX4. Interacts with MAEL. Interacts with PIWIL1, PIWIL2 and PIWIL4 (when methylated on arginine residues). Interacts with TDRD12. Testis and ovary specific. Present in germ-line cells and is most abundant in fetal prospermatogonia and postnatal primary spermatocytes (at protein level).

It localises to the cytoplasm. Plays a central role during spermatogenesis by participating in the repression transposable elements and preventing their mobilization, which is essential for the germline integrity. Acts via the piRNA metabolic process, which mediates the repression of transposable elements during meiosis by forming complexes composed of piRNAs and Piwi proteins and governs the methylation and subsequent repression of transposons. Required for the localization of Piwi proteins to the meiotic nuage. Involved in the piRNA metabolic process by ensuring the entry of correct transcripts into the normal piRNA pool and limiting the entry of cellular transcripts into the piRNA pathway. May act by allowing the recruitment of piRNA biogenesis or loading factors that ensure the correct entry of transcripts and piRNAs into Piwi proteins. This chain is Tudor domain-containing protein 1 (Tdrd1), found in Mus musculus (Mouse).